Consider the following 528-residue polypeptide: DNA primase large subunit (528 aa).

The tract at residues 210–239 (NEEHQRKQYFQQEKFIKLPFENVIELVGNR) is H-T-H-like motif. Cysteine 336, cysteine 417, cysteine 434, and cysteine 474 together coordinate [4Fe-4S] cluster.

Belongs to the eukaryotic-type primase large subunit family. As to quaternary structure, DNA polymerase alpha:primase is a four subunit enzyme complex, which is assembled throughout the cell cycle, and consists of the two DNA polymerase subunits A POL1 and B POL12, and the DNA primase large PRI2 and small PRI1 subunits. Interacts with MCM10. [4Fe-4S] cluster serves as cofactor.

Functionally, DNA primase is the polymerase that synthesizes small RNA primers for the Okazaki fragments made during discontinuous DNA replication. In a complex with DNA polymerase alpha (DNA polymerase alpha:primase) constitutes a replicative polymerase. Both primase components participate in formation of the active center, but the ATP-binding site is exclusively located on p48. The sequence is that of DNA primase large subunit (PRI2) from Saccharomyces cerevisiae (strain ATCC 204508 / S288c) (Baker's yeast).